Consider the following 769-residue polypeptide: Polymeric immunoglobulin receptor (769 aa).

An N-terminal signal peptide occupies residues 1 to 18; it reads MRLSLFALLVTVFSGVST. Residues 19–643 are Extracellular-facing; it reads QSPIFGPQDV…SAGGQSGSSK (625 aa). The 106-residue stretch at 21 to 126 folds into the Ig-like V-type 1; required for binding to polymeric IgA and IgM domain; sequence PIFGPQDVSS…RGLFFDVSLE (106 aa). Residues C40 and C110 are joined by a disulfide bond. N-linked (GlcNAc...) asparagine glycosylation is found at N90, N135, and N206. Ig-like V-type domains lie at 135-237, 240-341, 353-457, and 463-563; these read NDTH…DLQV, PEPE…VQAW, NSRS…LQVA, and PDLE…IYVA. Cystine bridges form between C152-C220, C257-C324, and C370-C440. A glycan (N-linked (GlcNAc...) asparagine) is linked at N471. C484 and C546 are joined by a disulfide. Disordered stretches follow at residues 569 to 604 and 619 to 640; these read RGSP…NKAN and AGDQ…GQSG. Over residues 595-604 the composition is skewed to basic and acidic residues; it reads SVREDENKAN. Residues 644-666 traverse the membrane as a helical segment; sequence VLFSTLVPLGLVLAVGAVAVWVA. Over 667–769 the chain is Cytoplasmic; that stretch reads RVRHRKNVDR…AQVHDGPQEA (103 aa). A phosphoserine mark is found at S678, S687, S694, and S740. The tract at residues 719–741 is disordered; the sequence is EIETTTECTTEPEESKKAKRSSK. Over residues 731–741 the composition is skewed to basic and acidic residues; the sequence is EESKKAKRSSK.

As to quaternary structure, interacts (mainly via CDR1-like domain) with dimeric IgA. Interacts (mainly via CDR2-like domain) with pentameric IgM. Either free or part of the secretory IgA (sIgA) complex that consists of two, four or five IgA monomers, and two additional non-Ig polypeptides, namely the JCHAIN and the secretory component (the proteolytic product of PIGR). Free secretory component interacts with bacterial antigens toxA of C.difficile and eae of E.coli. N-glycosylated. N-glycosylation is required for anchoring IgA molecules to mucus, but is not necessary for Ig binding.

The protein resides in the cell membrane. The protein localises to the secreted. In terms of biological role, mediates selective transcytosis of polymeric IgA and IgM across mucosal epithelial cells. Binds polymeric IgA and IgM at the basolateral surface of epithelial cells. The complex is then transported across the cell to be secreted at the apical surface. During this process, a cleavage occurs that separates the extracellular (known as the secretory component) from the transmembrane segment. Through its N-linked glycans ensures anchoring of secretory IgA (sIgA) molecules to mucus lining the epithelial surface to neutralize extracellular pathogens. On its own (free form) may act as a non-specific microbial scavenger to prevent pathogen interaction with epithelial cells. This Rattus norvegicus (Rat) protein is Polymeric immunoglobulin receptor (Pigr).